The sequence spans 322 residues: Malate dehydrogenase (322 aa).

NAD(+)-binding positions include 10-15 (GSGMIG) and Asp34. Residues Arg83 and Arg89 each coordinate substrate. NAD(+)-binding positions include Asn96 and 119 to 121 (ITN). Positions 121 and 152 each coordinate substrate. Residue His176 is the Proton acceptor of the active site.

This sequence belongs to the LDH/MDH superfamily. MDH type 3 family.

The catalysed reaction is (S)-malate + NAD(+) = oxaloacetate + NADH + H(+). Catalyzes the reversible oxidation of malate to oxaloacetate. The sequence is that of Malate dehydrogenase from Mesorhizobium japonicum (strain LMG 29417 / CECT 9101 / MAFF 303099) (Mesorhizobium loti (strain MAFF 303099)).